Here is a 272-residue protein sequence, read N- to C-terminus: MRPSELTQLKQDGRAISILTAWDGLSAALVEAAGADVVLVGDSLAMVALCHATTLPVTVEQMLHHTQAVGRGFTRPLPQQPLVVCDLPFLSYQCGEDKAVAAAGSLLKHSCAAAVKLEGAEPEVLAVIERLVRMGIPVMGHLGLTPQAVHRLGYRRQAEDPRSQAQMLQQAKQLEQAGCFALVVEHVPSSIARCLSQQLTIPVIGIGAGEDCDGQVRVTADLLGLTPSQPPFSPPLIQGRQLCVEALQGWVKQLHQQAETATTTTSQPEPDC.

Mg(2+) is bound by residues D42 and D86. 3-methyl-2-oxobutanoate-binding positions include 42 to 43 (DS), D86, and K116. Mg(2+) is bound at residue E118. E185 functions as the Proton acceptor in the catalytic mechanism.

It belongs to the PanB family. Homodecamer; pentamer of dimers. The cofactor is Mg(2+).

Its subcellular location is the cytoplasm. The enzyme catalyses 3-methyl-2-oxobutanoate + (6R)-5,10-methylene-5,6,7,8-tetrahydrofolate + H2O = 2-dehydropantoate + (6S)-5,6,7,8-tetrahydrofolate. It participates in cofactor biosynthesis; (R)-pantothenate biosynthesis; (R)-pantoate from 3-methyl-2-oxobutanoate: step 1/2. In terms of biological role, catalyzes the reversible reaction in which hydroxymethyl group from 5,10-methylenetetrahydrofolate is transferred onto alpha-ketoisovalerate to form ketopantoate. This is 3-methyl-2-oxobutanoate hydroxymethyltransferase from Prochlorococcus marinus (strain MIT 9303).